A 286-amino-acid chain; its full sequence is Energy-coupling factor transporter ATP-binding protein EcfA2 (286 aa).

Residues I3–A246 form the ABC transporter domain. Position 40–47 (G40–S47) interacts with ATP.

The protein belongs to the ABC transporter superfamily. Energy-coupling factor EcfA family. In terms of assembly, forms a stable energy-coupling factor (ECF) transporter complex composed of 2 membrane-embedded substrate-binding proteins (S component), 2 ATP-binding proteins (A component) and 2 transmembrane proteins (T component).

The protein localises to the cell membrane. Functionally, ATP-binding (A) component of a common energy-coupling factor (ECF) ABC-transporter complex. Unlike classic ABC transporters this ECF transporter provides the energy necessary to transport a number of different substrates. This chain is Energy-coupling factor transporter ATP-binding protein EcfA2, found in Staphylococcus aureus (strain bovine RF122 / ET3-1).